A 606-amino-acid chain; its full sequence is DNA mismatch repair protein MutL (606 aa).

Positions 340–366 are disordered; sequence MNAFRPGYSPSGLRPSPSATWSAATSP. Residues 353-366 show a composition bias toward low complexity; that stretch reads RPSPSATWSAATSP.

The protein belongs to the DNA mismatch repair MutL/HexB family.

Its function is as follows. This protein is involved in the repair of mismatches in DNA. It is required for dam-dependent methyl-directed DNA mismatch repair. May act as a 'molecular matchmaker', a protein that promotes the formation of a stable complex between two or more DNA-binding proteins in an ATP-dependent manner without itself being part of a final effector complex. The protein is DNA mismatch repair protein MutL of Agrobacterium fabrum (strain C58 / ATCC 33970) (Agrobacterium tumefaciens (strain C58)).